Reading from the N-terminus, the 624-residue chain is Translocator protein BipB (624 aa).

The segment at 54–99 (LASEQCDAQPVTDDARLDRLDDKPALRAPRSDAAHAADGNARGNGG) is disordered. Residues 66-88 (DDARLDRLDDKPALRAPRSDAAH) show a composition bias toward basic and acidic residues. A coiled-coil region spans residues 313 to 343 (EMQAKREAELQKKSDEYQEQVKKAEEMQKTM). A run of 3 helical transmembrane segments spans residues 359-379 (FAAA…GLAL), 405-425 (AILK…LVAC), and 434-454 (LAGA…AAFV).

The protein belongs to the SctE/SipB/YopB family.

It is found in the secreted. The protein localises to the host membrane. In terms of biological role, plays a role in the bacterium-induced formation of multinucleated giant cell (MNGC), which is formed after host cell fusion, as well as in the intercellular spreading of bacteria and in the induction of apoptosis in macrophages. May act in concert with other effector proteins to induce fusion of host cell membranes. The sequence is that of Translocator protein BipB (bipB) from Burkholderia thailandensis (strain ATCC 700388 / DSM 13276 / CCUG 48851 / CIP 106301 / E264).